Reading from the N-terminus, the 427-residue chain is Glutamate-1-semialdehyde 2,1-aminomutase (427 aa).

Residue Lys-267 is modified to N6-(pyridoxal phosphate)lysine.

The protein belongs to the class-III pyridoxal-phosphate-dependent aminotransferase family. HemL subfamily. In terms of assembly, homodimer. Pyridoxal 5'-phosphate serves as cofactor.

It localises to the cytoplasm. The catalysed reaction is (S)-4-amino-5-oxopentanoate = 5-aminolevulinate. The protein operates within porphyrin-containing compound metabolism; protoporphyrin-IX biosynthesis; 5-aminolevulinate from L-glutamyl-tRNA(Glu): step 2/2. The polypeptide is Glutamate-1-semialdehyde 2,1-aminomutase (Acetivibrio thermocellus (strain ATCC 27405 / DSM 1237 / JCM 9322 / NBRC 103400 / NCIMB 10682 / NRRL B-4536 / VPI 7372) (Clostridium thermocellum)).